The primary structure comprises 257 residues: 3-methyl-2-oxobutanoate hydroxymethyltransferase (257 aa).

Mg(2+)-binding residues include Asp-42 and Asp-86. 3-methyl-2-oxobutanoate-binding positions include 42–43, Asp-86, and Lys-116; that span reads DS. Glu-118 serves as a coordination point for Mg(2+). Glu-185 (proton acceptor) is an active-site residue.

The protein belongs to the PanB family. Homodecamer; pentamer of dimers. The cofactor is Mg(2+).

The protein resides in the cytoplasm. It catalyses the reaction 3-methyl-2-oxobutanoate + (6R)-5,10-methylene-5,6,7,8-tetrahydrofolate + H2O = 2-dehydropantoate + (6S)-5,6,7,8-tetrahydrofolate. It functions in the pathway cofactor biosynthesis; (R)-pantothenate biosynthesis; (R)-pantoate from 3-methyl-2-oxobutanoate: step 1/2. Functionally, catalyzes the reversible reaction in which hydroxymethyl group from 5,10-methylenetetrahydrofolate is transferred onto alpha-ketoisovalerate to form ketopantoate. The polypeptide is 3-methyl-2-oxobutanoate hydroxymethyltransferase (Prochlorococcus marinus (strain MIT 9515)).